The primary structure comprises 262 residues: Phosphonates import ATP-binding protein PhnC (262 aa).

The ABC transporter domain maps to 5-253 (ICVEQLSKTF…RFDHLYRSIN (249 aa)). 37-44 (GPSGSGKS) contributes to the ATP binding site.

The protein belongs to the ABC transporter superfamily. Phosphonates importer (TC 3.A.1.9.1) family. The complex is composed of two ATP-binding proteins (PhnC), two transmembrane proteins (PhnE) and a solute-binding protein (PhnD).

It localises to the cell inner membrane. The enzyme catalyses phosphonate(out) + ATP + H2O = phosphonate(in) + ADP + phosphate + H(+). Functionally, part of the ABC transporter complex PhnCDE involved in phosphonates import. Responsible for energy coupling to the transport system. In Escherichia coli O157:H7, this protein is Phosphonates import ATP-binding protein PhnC.